We begin with the raw amino-acid sequence, 776 residues long: Endonuclease MutS2 (776 aa).

330 to 337 (GPNTGGKT) lines the ATP pocket. Residues 701-776 (LDLRGMRYEE…GSGATIAILK (76 aa)) enclose the Smr domain.

The protein belongs to the DNA mismatch repair MutS family. MutS2 subfamily. In terms of assembly, homodimer. Binds to stalled ribosomes, contacting rRNA.

Its function is as follows. Endonuclease that is involved in the suppression of homologous recombination and thus may have a key role in the control of bacterial genetic diversity. Functionally, acts as a ribosome collision sensor, splitting the ribosome into its 2 subunits. Detects stalled/collided 70S ribosomes which it binds and splits by an ATP-hydrolysis driven conformational change. Acts upstream of the ribosome quality control system (RQC), a ribosome-associated complex that mediates the extraction of incompletely synthesized nascent chains from stalled ribosomes and their subsequent degradation. Probably generates substrates for RQC. This chain is Endonuclease MutS2, found in Lactococcus lactis subsp. lactis (strain IL1403) (Streptococcus lactis).